A 199-amino-acid chain; its full sequence is MKQSHFFAHLSRLKLINRWPLMRNVRTENVSEHSLQVAMVAHALAAIKNRKFGGNVNAERIALLAMYHDASEVLTGDLPTPVKYFNSQIAQEYKAIEKIAQQKLVDMVPEELRDIFAPLIDEHAYSDEEKSLVKQADALCAYLKCLEELAAGNNEFLLAKTRLEATLAARRSQEMDYFMEVFVPSFHLSLDEISQDSPL.

Substrate is bound by residues 18 to 19 (RW) and His33. The HD domain maps to 30–142 (VSEHSLQVAM…VKQADALCAY (113 aa)). Residues His33, His68, and Asp69 each contribute to the a divalent metal cation site. Substrate is bound by residues Asp69, 77–80 (DLPT), and Asp137. Asp137 contributes to the a divalent metal cation binding site.

This sequence belongs to the 5DNU family. In terms of assembly, homodimer. A divalent metal cation is required as a cofactor.

The protein localises to the cytoplasm. The catalysed reaction is a 2'-deoxyribonucleoside 5'-phosphate + H2O = a 2'-deoxyribonucleoside + phosphate. Functionally, catalyzes the strictly specific dephosphorylation of 2'-deoxyribonucleoside 5'-monophosphates. In Shigella dysenteriae serotype 1 (strain Sd197), this protein is 5'-deoxynucleotidase YfbR.